The chain runs to 469 residues: Neuraminidase (469 aa).

Residues 1–6 lie on the Intravirion side of the membrane; the sequence is MNPNQK. A helical transmembrane segment spans residues 7–29; that stretch reads TITIGSVSLTIATVCFLMQIAIL. An involved in apical transport and lipid raft association region spans residues 11–33; it reads GSVSLTIATVCFLMQIAILATTV. At 30-469 the chain is on the virion surface side; it reads ATTVTLHFKQ…DGANINFMPI (440 aa). The tract at residues 36–88 is hypervariable stalk region; that stretch reads HFKQHECDSPASNQVMPCEPIIIERNITEIVYLNNTTIEKEICPEVVEYRNWS. Asparagine 61, asparagine 69, asparagine 70, and asparagine 86 each carry an N-linked (GlcNAc...) asparagine; by host glycan. The segment at 91 to 469 is head of neuraminidase; that stretch reads QCQITGFAPF…DGANINFMPI (379 aa). 8 disulfides stabilise this stretch: cysteine 92–cysteine 417, cysteine 124–cysteine 129, cysteine 183–cysteine 230, cysteine 232–cysteine 237, cysteine 278–cysteine 291, cysteine 280–cysteine 289, cysteine 318–cysteine 337, and cysteine 421–cysteine 447. Arginine 118 provides a ligand contact to substrate. Residue asparagine 146 is glycosylated (N-linked (GlcNAc...) asparagine; by host). The active-site Proton donor/acceptor is aspartate 151. Arginine 152 provides a ligand contact to substrate. Asparagine 200 and asparagine 234 each carry an N-linked (GlcNAc...) asparagine; by host glycan. Residue 276–277 participates in substrate binding; it reads EE. Arginine 292 contributes to the substrate binding site. The Ca(2+) site is built by aspartate 293, glycine 297, and aspartate 324. Positions 325 to 349 are disordered; that stretch reads TPRNDDSSSNSNCRDPNNERGNPGV. Arginine 371 is a substrate binding site. A glycan (N-linked (GlcNAc...) asparagine; by host) is linked at asparagine 402. Tyrosine 406 serves as the catalytic Nucleophile.

This sequence belongs to the glycosyl hydrolase 34 family. Homotetramer. Ca(2+) is required as a cofactor. N-glycosylated.

The protein localises to the virion membrane. It localises to the host apical cell membrane. The enzyme catalyses Hydrolysis of alpha-(2-&gt;3)-, alpha-(2-&gt;6)-, alpha-(2-&gt;8)- glycosidic linkages of terminal sialic acid residues in oligosaccharides, glycoproteins, glycolipids, colominic acid and synthetic substrates.. Inhibited by the neuraminidase inhibitors zanamivir (Relenza) and oseltamivir (Tamiflu). These drugs interfere with the release of progeny virus from infected cells and are effective against all influenza strains. Resistance to neuraminidase inhibitors is quite rare. Its function is as follows. Catalyzes the removal of terminal sialic acid residues from viral and cellular glycoconjugates. Cleaves off the terminal sialic acids on the glycosylated HA during virus budding to facilitate virus release. Additionally helps virus spread through the circulation by further removing sialic acids from the cell surface. These cleavages prevent self-aggregation and ensure the efficient spread of the progeny virus from cell to cell. Otherwise, infection would be limited to one round of replication. Described as a receptor-destroying enzyme because it cleaves a terminal sialic acid from the cellular receptors. May facilitate viral invasion of the upper airways by cleaving the sialic acid moieties on the mucin of the airway epithelial cells. Likely to plays a role in the budding process through its association with lipid rafts during intracellular transport. May additionally display a raft-association independent effect on budding. Plays a role in the determination of host range restriction on replication and virulence. Sialidase activity in late endosome/lysosome traffic seems to enhance virus replication. The protein is Neuraminidase of Influenza A virus (strain A/RI/5-/1957 H2N2).